Here is a 161-residue protein sequence, read N- to C-terminus: Pleiotrophin-B (161 aa).

The first 23 residues, 1–23 (MHHQHGLFMLALLAFLLVMTVLG), serve as a signal peptide directing secretion. Cystine bridges form between cysteine 41/cysteine 70, cysteine 49/cysteine 79, cysteine 56/cysteine 83, cysteine 93/cysteine 125, and cysteine 103/cysteine 135. Chondroitin sulfate binding stretches follow at residues 86–93 (KKQFGAEC) and 117–125 (KRALHNAEC). Positions 136–161 (GKVTKPKLQESKKKKKEGKNKEKLLD) are disordered. The tract at residues 141 to 161 (PKLQESKKKKKEGKNKEKLLD) is chondroitin sulfate A binding.

It belongs to the pleiotrophin family. As to expression, expressed in high levels in brain and eye. Lower levels in bone. In the tailbud embryo stage, it is expressed exclusively in the central nervous system, especially in the hind region of the brain.

Its subcellular location is the secreted. Functionally, secreted growth factor that mediates its signal through cell-surface proteoglycan and non-proteoglycan receptors. Binds cell-surface proteoglycan receptor via their chondroitin sulfate (CS) groups. Thereby regulates many processes like cell proliferation, cell survival, cell growth, cell differentiation and cell migration. Has antibacterial activity against both Gram-positive and Gram-negative bacteria. The protein is Pleiotrophin-B (ptn-b) of Xenopus laevis (African clawed frog).